The primary structure comprises 99 residues: Bacterial microcompartment shell vertex protein EutN (99 aa).

The region spanning 5-87 (MKLAVVTGQI…VDLCVIGIVD (83 aa)) is the BMV domain.

It belongs to the CcmL/EutN family. Homopentamer with a small central pore.

It is found in the bacterial microcompartment. The protein operates within amine and polyamine degradation; ethanolamine degradation. Probably forms vertices in the bacterial microcompartment (BMC) shell dedicated to ethanolamine degradation. Expression of eutK, eutL, eutM, eutN, eutS (eutSMNLK) in E.coli leads to formation of a single BMC. Coexpression of eutQ with eutSMNLK permits E.coli to make cells with more than one mobile BMC, as is usual in vivo. It may be involved in transporting positively charged molecules into and out of the BMC. In terms of biological role, the ethanolamine (EA) catabolic bacterial microcompartment (BMC) probably concentrates low levels of ethanolamine catabolic enzymes, concentrates volatile reaction intermediates, keeps the level of toxic acetaldehyde low, generates enough acetyl-CoA to support cell growth, and maintains a pool of free coenzyme A (CoA) and NAD. Its function is as follows. Expression of the eut operon allows this bacteria to use ethanolamine (EA) as a carbon, nitrogen and energy source. It relies on cobalamin (vitamin B12) both as a cofactor for the ethanolamine ammonia-lyase (EAL) activity and to induce the operon. EA enhances bacterial survival in macrophages in a concentration-dependent manner, suggesting it is an important nutrient during infection. The polypeptide is Bacterial microcompartment shell vertex protein EutN (Salmonella typhimurium (strain LT2 / SGSC1412 / ATCC 700720)).